A 382-amino-acid polypeptide reads, in one-letter code: Mannitol-1-phosphate 5-dehydrogenase (382 aa).

Ala3–Gly14 provides a ligand contact to NAD(+). Lys269 carries the post-translational modification N6-acetyllysine.

Belongs to the mannitol dehydrogenase family.

It catalyses the reaction D-mannitol 1-phosphate + NAD(+) = beta-D-fructose 6-phosphate + NADH + H(+). The sequence is that of Mannitol-1-phosphate 5-dehydrogenase from Escherichia coli (strain ATCC 8739 / DSM 1576 / NBRC 3972 / NCIMB 8545 / WDCM 00012 / Crooks).